A 67-amino-acid chain; its full sequence is Protein AaeX (67 aa).

A run of 2 helical transmembrane segments spans residues 3-23 (LFPV…ELLL) and 43-63 (FVWH…YLIS).

The protein belongs to the AaeX family.

Its subcellular location is the cell membrane. The protein is Protein AaeX of Escherichia coli O1:K1 / APEC.